The chain runs to 1558 residues: Eukaryotic translation initiation factor 2-alpha kinase 1 (1558 aa).

Positions 429 to 789 (FFEEKILGCG…AYNLLHESVL (361 aa)) constitute a Protein kinase domain. ATP is bound by residues 435–443 (LGCGGFGYV) and Lys458. Residue Asp660 is the Proton acceptor of the active site. A disordered region spans residues 1014 to 1033 (GTSTNNNNNNNNNNMGNNNI).

This sequence belongs to the protein kinase superfamily. Ser/Thr protein kinase family. GCN2 subfamily. Post-translationally, auto-phosphorylated.

The enzyme catalyses L-seryl-[protein] + ATP = O-phospho-L-seryl-[protein] + ADP + H(+). It catalyses the reaction L-threonyl-[protein] + ATP = O-phospho-L-threonyl-[protein] + ADP + H(+). In blood stage parasites, phosphorylates translation factor eIF2alpha in response to amino acid starvation. During the asexual blood stage, involved in the response to the host hormone melatonin which is used by the parasite to modulate its cell cycle. The protein is Eukaryotic translation initiation factor 2-alpha kinase 1 of Plasmodium falciparum (isolate 3D7).